The sequence spans 373 residues: Chaperone protein DnaJ (373 aa).

One can recognise a J domain in the interval 5 to 70 (DYYEVLGVNR…QKRAAYDQYG (66 aa)). The segment at 133–211 (GTETKIRIPV…CHGGGRVKQH (79 aa)) adopts a CR-type zinc-finger fold. Zn(2+) is bound by residues Cys-146, Cys-149, Cys-163, Cys-166, Cys-185, Cys-188, Cys-199, and Cys-202. CXXCXGXG motif repeat units lie at residues 146–153 (CETCHGSG), 163–170 (CSTCGGHG), 185–192 (CPKCHGSG), and 199–206 (CPTCHGGG). The segment at 346–373 (LEDINQQDSGKHSPREKSWMTKVKDFFQ) is disordered. The span at 354-373 (SGKHSPREKSWMTKVKDFFQ) shows a compositional bias: basic and acidic residues.

Belongs to the DnaJ family. As to quaternary structure, homodimer. Zn(2+) is required as a cofactor.

The protein resides in the cytoplasm. Its function is as follows. Participates actively in the response to hyperosmotic and heat shock by preventing the aggregation of stress-denatured proteins and by disaggregating proteins, also in an autonomous, DnaK-independent fashion. Unfolded proteins bind initially to DnaJ; upon interaction with the DnaJ-bound protein, DnaK hydrolyzes its bound ATP, resulting in the formation of a stable complex. GrpE releases ADP from DnaK; ATP binding to DnaK triggers the release of the substrate protein, thus completing the reaction cycle. Several rounds of ATP-dependent interactions between DnaJ, DnaK and GrpE are required for fully efficient folding. Also involved, together with DnaK and GrpE, in the DNA replication of plasmids through activation of initiation proteins. This is Chaperone protein DnaJ from Methylobacillus flagellatus (strain ATCC 51484 / DSM 6875 / VKM B-1610 / KT).